We begin with the raw amino-acid sequence, 342 residues long: uncharacterized protein (342 aa).

It belongs to the proline racemase family.

This is an uncharacterized protein from Brucella canis (strain ATCC 23365 / NCTC 10854 / RM-666).